A 546-amino-acid polypeptide reads, in one-letter code: Chaperonin GroEL (546 aa).

ATP contacts are provided by residues 29-32, lysine 50, 86-90, glycine 414, 477-479, and aspartate 493; these read TLGP, DGTTT, and NAL.

The protein belongs to the chaperonin (HSP60) family. Forms a cylinder of 14 subunits composed of two heptameric rings stacked back-to-back. Interacts with the co-chaperonin GroES.

The protein localises to the cytoplasm. It carries out the reaction ATP + H2O + a folded polypeptide = ADP + phosphate + an unfolded polypeptide.. Functionally, together with its co-chaperonin GroES, plays an essential role in assisting protein folding. The GroEL-GroES system forms a nano-cage that allows encapsulation of the non-native substrate proteins and provides a physical environment optimized to promote and accelerate protein folding. This chain is Chaperonin GroEL, found in Leptospira interrogans serogroup Icterohaemorrhagiae serovar copenhageni (strain Fiocruz L1-130).